Reading from the N-terminus, the 253-residue chain is Glucosamine-6-phosphate deaminase (253 aa).

Asp-67 functions as the Proton acceptor; for enolization step in the catalytic mechanism. Asn-136 (for ring-opening step) is an active-site residue. His-138 (proton acceptor; for ring-opening step) is an active-site residue. Residue Glu-143 is the For ring-opening step of the active site.

The protein belongs to the glucosamine/galactosamine-6-phosphate isomerase family. NagB subfamily.

The catalysed reaction is alpha-D-glucosamine 6-phosphate + H2O = beta-D-fructose 6-phosphate + NH4(+). It participates in amino-sugar metabolism; N-acetylneuraminate degradation; D-fructose 6-phosphate from N-acetylneuraminate: step 5/5. Catalyzes the reversible isomerization-deamination of glucosamine 6-phosphate (GlcN6P) to form fructose 6-phosphate (Fru6P) and ammonium ion. The protein is Glucosamine-6-phosphate deaminase of Thermoanaerobacter sp. (strain X514).